A 447-amino-acid polypeptide reads, in one-letter code: 1-aminocyclopropane-1-carboxylate synthase 7 (447 aa).

Glu61 and Tyr100 together coordinate substrate. N6-(pyridoxal phosphate)lysine is present on Lys285.

It belongs to the class-I pyridoxal-phosphate-dependent aminotransferase family. In terms of assembly, homodimer and heterodimer. In vivo, the relevance of heterodimerization with other ACS enzymes is however unsure. Interacts with XBAT32. Pyridoxal 5'-phosphate serves as cofactor. Ubiquitinated by XBAT32. Ubiquitination probably leads to its subsequent degradation, thus controlling ethylene production. Expressed in roots.

It catalyses the reaction S-adenosyl-L-methionine = 1-aminocyclopropane-1-carboxylate + S-methyl-5'-thioadenosine + H(+). It functions in the pathway alkene biosynthesis; ethylene biosynthesis via S-adenosyl-L-methionine; ethylene from S-adenosyl-L-methionine: step 1/2. 1-aminocyclopropane-1-carboxylate synthase (ACS) enzymes catalyze the conversion of S-adenosyl-L-methionine (SAM) into 1-aminocyclopropane-1-carboxylate (ACC), a direct precursor of ethylene. The polypeptide is 1-aminocyclopropane-1-carboxylate synthase 7 (ACS7) (Arabidopsis thaliana (Mouse-ear cress)).